A 1960-amino-acid polypeptide reads, in one-letter code: Intraflagellar transport protein 172 (1960 aa).

WD repeat units lie at residues 63 to 103 (SNKD…TDKK) and 328 to 367 (GFLP…YRYC). TPR repeat units follow at residues 1064–1098 (KADQ…QSYR), 1362–1395 (CDLF…QEIV), and 1397–1428 (MYLD…RSIR).

Belongs to the IFT172 family.

The protein resides in the cell projection. Its subcellular location is the cilium. It is found in the flagellum. The protein localises to the cytoplasm. It localises to the cytoskeleton. The protein resides in the flagellum axoneme. Its subcellular location is the flagellum basal body. Its function is as follows. Component of the intraflagellar transport complex B (IFT-B) involved in flagellar assembly. This Giardia intestinalis (strain ATCC 50803 / WB clone C6) (Giardia lamblia) protein is Intraflagellar transport protein 172.